A 169-amino-acid polypeptide reads, in one-letter code: Ribosome maturation factor RimM (169 aa).

The 75-residue stretch at 94–168 (DDEFYHADLI…RIVADPPEGL (75 aa)) folds into the PRC barrel domain.

The protein belongs to the RimM family. As to quaternary structure, binds ribosomal protein uS19.

The protein localises to the cytoplasm. Functionally, an accessory protein needed during the final step in the assembly of 30S ribosomal subunit, possibly for assembly of the head region. Essential for efficient processing of 16S rRNA. May be needed both before and after RbfA during the maturation of 16S rRNA. It has affinity for free ribosomal 30S subunits but not for 70S ribosomes. The protein is Ribosome maturation factor RimM of Cereibacter sphaeroides (strain ATCC 17023 / DSM 158 / JCM 6121 / CCUG 31486 / LMG 2827 / NBRC 12203 / NCIMB 8253 / ATH 2.4.1.) (Rhodobacter sphaeroides).